A 236-amino-acid chain; its full sequence is Ureidoacrylate amidohydrolase RutB (236 aa).

Residue Asp-24 is the Proton acceptor of the active site. The active site involves Lys-133. Residue Cys-166 is the Nucleophile of the active site.

It belongs to the isochorismatase family. RutB subfamily.

It catalyses the reaction (Z)-3-ureidoacrylate + H2O + H(+) = (Z)-3-aminoacrylate + NH4(+) + CO2. The catalysed reaction is (Z)-3-ureidoacrylate + H2O = (Z)-3-aminoacrylate + carbamate + H(+). The enzyme catalyses (Z)-2-methylureidoacrylate + H2O + H(+) = (Z)-2-methylaminoacrylate + NH4(+) + CO2. Functionally, hydrolyzes ureidoacrylate to form aminoacrylate and carbamate. The carbamate hydrolyzes spontaneously, thereby releasing one of the nitrogen atoms of the pyrimidine ring as ammonia and one of its carbon atoms as CO2. The protein is Ureidoacrylate amidohydrolase RutB of Klebsiella pneumoniae (strain 342).